The primary structure comprises 256 residues: Low molecular mass lipoprotein PBMHP-6 (256 aa).

Positions 1-19 are cleaved as a signal peptide; sequence MRLTLFAFVLAVCALASNA.

The protein belongs to the 30 kDa lipoprotein family.

The protein resides in the secreted. In Bombyx mori (Silk moth), this protein is Low molecular mass lipoprotein PBMHP-6.